A 418-amino-acid polypeptide reads, in one-letter code: Tryptophan synthase beta chain (418 aa).

A compositionally biased stretch (polar residues) spans 1 to 17 (MTSTLPNASTPDPSSLQ). The interval 1 to 23 (MTSTLPNASTPDPSSLQPAVRPG) is disordered. Position 111 is an N6-(pyridoxal phosphate)lysine (lysine 111).

It belongs to the TrpB family. Tetramer of two alpha and two beta chains. Pyridoxal 5'-phosphate is required as a cofactor.

The enzyme catalyses (1S,2R)-1-C-(indol-3-yl)glycerol 3-phosphate + L-serine = D-glyceraldehyde 3-phosphate + L-tryptophan + H2O. Its pathway is amino-acid biosynthesis; L-tryptophan biosynthesis; L-tryptophan from chorismate: step 5/5. Its function is as follows. The beta subunit is responsible for the synthesis of L-tryptophan from indole and L-serine. This chain is Tryptophan synthase beta chain, found in Synechococcus sp. (strain CC9605).